Consider the following 271-residue polypeptide: Ribosomal RNA small subunit methyltransferase A (271 aa).

Residues Leu-20, Gly-45, Glu-66, Asp-90, and Asn-112 each contribute to the S-adenosyl-L-methionine site.

It belongs to the class I-like SAM-binding methyltransferase superfamily. rRNA adenine N(6)-methyltransferase family. RsmA subfamily.

The protein resides in the cytoplasm. It carries out the reaction adenosine(1518)/adenosine(1519) in 16S rRNA + 4 S-adenosyl-L-methionine = N(6)-dimethyladenosine(1518)/N(6)-dimethyladenosine(1519) in 16S rRNA + 4 S-adenosyl-L-homocysteine + 4 H(+). In terms of biological role, specifically dimethylates two adjacent adenosines (A1518 and A1519) in the loop of a conserved hairpin near the 3'-end of 16S rRNA in the 30S particle. May play a critical role in biogenesis of 30S subunits. The chain is Ribosomal RNA small subunit methyltransferase A from Blochmanniella floridana.